A 556-amino-acid polypeptide reads, in one-letter code: Phenylalanine--tRNA ligase beta subunit (556 aa).

Positions 274–349 constitute a B5 domain; that stretch reads HEPEEMEVDL…ITLGLNKIGY (76 aa). 4 residues coordinate Mg(2+): Asp-327, Asp-333, Glu-336, and Glu-337.

The protein belongs to the phenylalanyl-tRNA synthetase beta subunit family. Type 2 subfamily. In terms of assembly, tetramer of two alpha and two beta subunits. It depends on Mg(2+) as a cofactor.

The protein resides in the cytoplasm. The catalysed reaction is tRNA(Phe) + L-phenylalanine + ATP = L-phenylalanyl-tRNA(Phe) + AMP + diphosphate + H(+). The polypeptide is Phenylalanine--tRNA ligase beta subunit (Korarchaeum cryptofilum (strain OPF8)).